The chain runs to 333 residues: Cell division protein FtsQ (333 aa).

The segment at 1-99 (MTGTGPHGDP…ARREAKRRAV (99 aa)) is disordered. Topologically, residues 1–118 (MTGTGPHGDP…VPRNTIRGLK (118 aa)) are cytoplasmic. Acidic residues predominate over residues 11-22 (AEDPAGPDDTAA). The segment covering 44–57 (TTETTAQTGTTAEA) has biased composition (low complexity). Over residues 73–92 (ERAERRAARDRAMAIEQARR) the composition is skewed to basic and acidic residues. The chain crosses the membrane as a helical span at residues 119 to 139 (VLMWAALVSVLAVALGLLLYF). The Extracellular segment spans residues 140–333 (TPIMSARNVE…VSSPDLPTVK (194 aa)). In terms of domain architecture, POTRA spans 143–211 (MSARNVEVSG…STLKISIVER (69 aa)).

The protein belongs to the FtsQ/DivIB family. FtsQ subfamily.

It localises to the cell membrane. Its function is as follows. Essential cell division protein. In Mycolicibacterium smegmatis (strain ATCC 700084 / mc(2)155) (Mycobacterium smegmatis), this protein is Cell division protein FtsQ.